Here is a 400-residue protein sequence, read N- to C-terminus: Large envelope protein (400 aa).

Met1 bears the N-acetylmethionine mark. Disordered stretches follow at residues 1-54 (MGGW…HWPE) and 85-116 (LTTV…RDSH). Gly2 carries N-myristoyl glycine; by host lipidation. The pre-S1 stretch occupies residues 2–119 (GGWSSKPRQG…PPLRDSHPQA (118 aa)). A pre-S region spans residues 2–174 (GGWSSKPRQG…FSRTGDPAPN (173 aa)). Residues 2–181 (GGWSSKPRQG…APNMENTTSG (180 aa)) lie on the Virion surface; in external conformation side of the membrane. The Intravirion; in internal conformation segment spans residues 2–253 (GGWSSKPRQG…PGYRWMCLRR (252 aa)). N-linked (GlcNAc...) asparagine glycosylation is present at Trp4. Residues 96–106 (STNRQSGRQPT) are compositionally biased toward polar residues. The tract at residues 120–174 (MQWNSTTFHQALLDPRVRGLYFPAGGSSSGTVNPVPTTASPISSIFSRTGDPAPN) is pre-S2. Residues 182–202 (FLGPLLVLQAGFFLLTRILTI) traverse the membrane as a helical segment. At 203-253 (PQSLDSWWTSLNFLGGAPTCPGQNSQSPTSNHSPTSCPPICPGYRWMCLRR) the chain is on the intravirion; in external conformation side. Residues 254 to 274 (FIIFLFILLLCLIFLLVLLDY) form a helical membrane-spanning segment. Residues 275–348 (QGMLPVCPLL…WASVRFSWLS (74 aa)) lie on the Virion surface side of the membrane. An N-linked (GlcNAc...) asparagine; by host glycan is attached at Asn320. The helical transmembrane segment at 349-369 (LLVPFVQWFAGLSPTVWLSVI) threads the bilayer. Residues 370–375 (WMMWYW) are Intravirion-facing. A helical membrane pass occupies residues 376-398 (GPSLYNILSPFLPLLPIFFCLWV). At 399-400 (YI) the chain is on the virion surface side.

It belongs to the orthohepadnavirus major surface antigen family. In terms of assembly, in its internal form (Li-HBsAg), interacts with the capsid protein and with the isoform S. Interacts with host chaperone CANX. As to quaternary structure, associates with host chaperone CANX through its pre-S2 N glycan; this association may be essential for isoform M proper secretion. Interacts with isoform L. Interacts with the antigens of satellite virus HDV (HDVAgs); this interaction is required for encapsidation of HDV genomic RNA. In terms of processing, isoform M is N-terminally acetylated by host at a ratio of 90%, and N-glycosylated by host at the pre-S2 region. Myristoylated.

It is found in the virion membrane. Its function is as follows. The large envelope protein exists in two topological conformations, one which is termed 'external' or Le-HBsAg and the other 'internal' or Li-HBsAg. In its external conformation the protein attaches the virus to cell receptors and thereby initiating infection. This interaction determines the species specificity and liver tropism. This attachment induces virion internalization predominantly through caveolin-mediated endocytosis. The large envelope protein also assures fusion between virion membrane and endosomal membrane. In its internal conformation the protein plays a role in virion morphogenesis and mediates the contact with the nucleocapsid like a matrix protein. The middle envelope protein plays an important role in the budding of the virion. It is involved in the induction of budding in a nucleocapsid independent way. In this process the majority of envelope proteins bud to form subviral lipoprotein particles of 22 nm of diameter that do not contain a nucleocapsid. The sequence is that of Large envelope protein from Homo sapiens (Human).